Here is a 229-residue protein sequence, read N- to C-terminus: C-&gt;U-editing enzyme APOBEC-1 (229 aa).

The 125-residue stretch at Val-10–Leu-134 folds into the CMP/dCMP-type deaminase domain. His-61 is a Zn(2+) binding site. Residue Glu-63 is the Proton donor of the active site. Positions 93 and 96 each coordinate Zn(2+).

Belongs to the cytidine and deoxycytidylate deaminase family. In terms of assembly, homodimer. Interacts with A1CF; form an mRNA editing complex. Interacts with RBM47; form an mRNA editing complex. Found in a complex with CELF2/CUGBP2 and A1CF. Interacts with HNRPAB. Interacts with SYNCRIP. Requires Zn(2+) as cofactor. As to expression, expressed in the liver as well as small intestine.

It is found in the cytoplasm. Its subcellular location is the nucleus. It catalyses the reaction a cytidine in mRNA + H2O + H(+) = a uridine in mRNA + NH4(+). The catalysed reaction is cytidine(6666) in apoB mRNA + H2O + H(+) = uridine(6666) in apoB mRNA + NH4(+). Its function is as follows. Cytidine deaminase catalyzing the cytidine to uridine postranscriptional editing of a variety of mRNAs. Form complexes with cofactors that confer differential editing activity and selectivity. Responsible for the postranscriptional editing of a CAA codon for Gln to a UAA codon for stop in the apolipoprotein B mRNA. Also involved in CGA (Arg) to UGA (Stop) editing in the NF1 mRNA. May also play a role in the epigenetic regulation of gene expression by participating in DNA demethylation. The polypeptide is C-&gt;U-editing enzyme APOBEC-1 (Rattus norvegicus (Rat)).